Here is a 223-residue protein sequence, read N- to C-terminus: Flagellar L-ring protein 2 (223 aa).

The first 17 residues, M1 to G17, serve as a signal peptide directing secretion. Residue C18 is the site of N-palmitoyl cysteine attachment. A lipid anchor (S-diacylglycerol cysteine) is attached at C18.

This sequence belongs to the FlgH family. The basal body constitutes a major portion of the flagellar organelle and consists of four rings (L,P,S, and M) mounted on a central rod.

It is found in the cell outer membrane. It localises to the bacterial flagellum basal body. Its function is as follows. Assembles around the rod to form the L-ring and probably protects the motor/basal body from shearing forces during rotation. The polypeptide is Flagellar L-ring protein 2 (Vibrio parahaemolyticus serotype O3:K6 (strain RIMD 2210633)).